The following is a 195-amino-acid chain: Putative kinase protein 143R (195 aa).

Position 8–16 (8–16 (GIIGAGKST)) interacts with ATP. Residues E31, Y43, and Q54 each coordinate substrate. The active-site Proton acceptor is the E78. R79 and E142 together coordinate substrate.

It belongs to the DCK/DGK family.

This chain is Putative kinase protein 143R, found in Acheta domesticus (House cricket).